Reading from the N-terminus, the 298-residue chain is Transcription factor SRM1 (298 aa).

The SANT domain maps to 7–62 (SDGSVWSREDDIAFERALANNTDESEERWEKIAADVPGKSVEQIKEHYELLVEDVT). Residues 68 to 118 (CVPLPAYGSPEGSNGHAGDEGASSKKGGNSHAGESNQAGKSKSDQERRKGI) form a disordered region. Residues 108 to 118 (SKSDQERRKGI) are compositionally biased toward basic and acidic residues. The HTH myb-type domain maps to 111 to 168 (DQERRKGIAWTEDEHRLFLLGLDKYGKGDWRSISRNFVVTRTPTQVASHAQKYFIRLN). The segment at residues 140-164 (WRSISRNFVVTRTPTQVASHAQKYF) is a DNA-binding region (H-T-H motif). Over residues 182–200 (ITSVGNADVSTPQGPITGQ) the composition is skewed to polar residues. The tract at residues 182–245 (ITSVGNADVS…GPPMYGTPAI (64 aa)) is disordered. The span at 201–215 (NNSNNNNNNNNNNSS) shows a compositional bias: low complexity.

As to expression, expressed in young seedlings, developing leaves, sepals and trichomes.

It is found in the nucleus. Transcription activator that coordinates abscisic acid (ABA) biosynthesis and signaling-related genes via binding to the specific promoter motif 5'-(A/T)AACCAT-3'. Represses ABA-mediated salt (e.g. NaCl and KCl) stress tolerance. Regulates leaf shape and promotes vegetative growth. The sequence is that of Transcription factor SRM1 from Arabidopsis thaliana (Mouse-ear cress).